Consider the following 87-residue polypeptide: Cell division topological specificity factor (87 aa).

Belongs to the MinE family.

In terms of biological role, prevents the cell division inhibition by proteins MinC and MinD at internal division sites while permitting inhibition at polar sites. This ensures cell division at the proper site by restricting the formation of a division septum at the midpoint of the long axis of the cell. The protein is Cell division topological specificity factor of Chelativorans sp. (strain BNC1).